Reading from the N-terminus, the 186-residue chain is MANIPLLLSLADDLGRMSMVPFYEPYYCQRQRNPYLALVGPMEQQLRQLEKQVGASSGSSGAVSKIGKDGFQVCMDVSHFKPSELVVKVQDNSVLVEGNHEEREDDHGFITRHFVRRYALPPGYEADKVASTLSSDGVLTIKVPKPPAIEDKGNERIVQIQQVGPAHLNVKENPKEAVEQDNGNDK.

The sHSP domain occupies Val53–Gln161. Residues Val163–Lys186 form a disordered region. Residues Asn169 to Lys186 show a composition bias toward basic and acidic residues.

This sequence belongs to the small heat shock protein (HSP20) family.

The sequence is that of Heat shock protein 23 (Hsp23) from Drosophila melanogaster (Fruit fly).